We begin with the raw amino-acid sequence, 541 residues long: Propionyl-CoA carboxylase beta chain, mitochondrial (541 aa).

A mitochondrion-targeting transit peptide spans 1 to 28 (MAAVIRIRAMAAGTRLRVLNCGLGTTIR). The CoA carboxyltransferase N-terminal domain occupies 34-292 (PVSVNERIEN…SNQDPASIRE (259 aa)). The segment at 34-535 (PVSVNERIEN…SKKVHRPWRK (502 aa)) is carboxyltransferase. Residue serine 73 is modified to Phosphoserine. At lysine 101 the chain carries N6-acetyllysine; alternate. Lysine 101 is subject to N6-succinyllysine; alternate. The residue at position 250 (lysine 250) is an N6-succinyllysine. A CoA carboxyltransferase C-terminal domain is found at 296–535 (PSDRLVPELD…SKKVHRPWRK (240 aa)). The acyl-CoA binding stretch occupies residues 327–360 (DEREFFEIMPNYAKNIVIGFARMNGRTVGIVGNQ). 2 positions are modified to N6-acetyllysine; alternate: lysine 476 and lysine 491. N6-succinyllysine; alternate occurs at positions 476 and 491.

Belongs to the AccD/PCCB family. As to quaternary structure, the holoenzyme is a dodecamer composed of 6 PCCA/alpha subunits and 6 PCCB/beta subunits.

The protein resides in the mitochondrion matrix. The catalysed reaction is propanoyl-CoA + hydrogencarbonate + ATP = (S)-methylmalonyl-CoA + ADP + phosphate + H(+). The enzyme catalyses butanoyl-CoA + hydrogencarbonate + ATP = (2S)-ethylmalonyl-CoA + ADP + phosphate + H(+). Its pathway is metabolic intermediate metabolism; propanoyl-CoA degradation; succinyl-CoA from propanoyl-CoA: step 1/3. This is one of the 2 subunits of the biotin-dependent propionyl-CoA carboxylase (PCC), a mitochondrial enzyme involved in the catabolism of odd chain fatty acids, branched-chain amino acids isoleucine, threonine, methionine, and valine and other metabolites. Propionyl-CoA carboxylase catalyzes the carboxylation of propionyl-CoA/propanoyl-CoA to D-methylmalonyl-CoA/(S)-methylmalonyl-CoA. Within the holoenzyme, the alpha subunit catalyzes the ATP-dependent carboxylation of the biotin carried by the biotin carboxyl carrier (BCC) domain, while the beta subunit then transfers the carboxyl group from carboxylated biotin to propionyl-CoA. Propionyl-CoA carboxylase also significantly acts on butyryl-CoA/butanoyl-CoA, which is converted to ethylmalonyl-CoA/(2S)-ethylmalonyl-CoA. Other alternative minor substrates include (2E)-butenoyl-CoA/crotonoyl-CoA. The polypeptide is Propionyl-CoA carboxylase beta chain, mitochondrial (Rattus norvegicus (Rat)).